A 340-amino-acid polypeptide reads, in one-letter code: Peroxisomal coenzyme A diphosphatase 1, peroxisomal (340 aa).

The N-terminal 7 residues, 1-7, are a transit peptide targeting the peroxisome; it reads MILSQRR. The region spanning 37 to 199 is the Nudix hydrolase domain; the sequence is KRNSAVIILL…DEDVKSYQAE (163 aa). The Nudix box motif lies at 77 to 99; the sequence is GKADYFQETFESVARREAEEEIG. Mg(2+)-binding residues include Glu93 and Glu97.

It belongs to the Nudix hydrolase family. PCD1 subfamily. Mn(2+) serves as cofactor. Requires Mg(2+) as cofactor. In terms of processing, the size of the cleaved transit peptide can be of 7 or 8 residues.

Its subcellular location is the peroxisome. The catalysed reaction is CoA + H2O = (R)-4'-phosphopantetheine + adenosine 3',5'-bisphosphate + 2 H(+). It carries out the reaction CoA-disulfide + H2O = 4'-phosphopantetheinyl-CoA disulfide + adenosine 3',5'-bisphosphate + 2 H(+). It catalyses the reaction 8-oxo-dGTP + H2O = 8-oxo-dGMP + diphosphate + H(+). The enzyme catalyses 2-oxo-dATP + H2O = 2-oxo-dAMP + diphosphate + H(+). Diphosphatase (pyrophosphatase) with specificity for coenzyme A and CoA derivatives. Catalyzes the hydrolysis of the diphosphate linkage in CoA to give 3',5'-ADP and 4'-phosphopantetheine. Prefers oxidized CoA disulfide (CoASSCoA) over CoA as a substrate. May be required to remove potentially toxic oxidized CoA disulfide from peroxisomes to maintain the capacity for beta-oxidation of fatty acids. Can also hydrolyze 8-oxo-dGTP and 2-OH-dATP in vitro; therefore it may function as a sanitizing enzyme for oxidized nucleotides and may contribute to prevention of spontaneous mutagenesis due to the misincorporation of these oxidized nucleotides during DNA synthesis. Shows moderate activity in vitro with several short chain acyl-CoA esters and very low activity on 3'-dephospho-CoA while is not active with (deoxy)nucleoside 5'-triphosphates, nucleoside 5'-di- or monophosphates, diadenosine polyphosphates, nucleoside 5'-diphosphosugars, cytidine 5'-diphosphoalcohols, NAD(+), NADH, or FAD. In Saccharomyces cerevisiae (strain ATCC 204508 / S288c) (Baker's yeast), this protein is Peroxisomal coenzyme A diphosphatase 1, peroxisomal (PCD1).